A 144-amino-acid polypeptide reads, in one-letter code: Large ribosomal subunit protein uL16 (144 aa).

Residues 1 to 19 (MLLPKRVKYRRQHRPKTTG) show a composition bias toward basic residues. A disordered region spans residues 1–26 (MLLPKRVKYRRQHRPKTTGRSKGGNE).

The protein belongs to the universal ribosomal protein uL16 family. As to quaternary structure, part of the 50S ribosomal subunit.

In terms of biological role, binds 23S rRNA and is also seen to make contacts with the A and possibly P site tRNAs. The protein is Large ribosomal subunit protein uL16 of Macrococcus caseolyticus (strain JCSC5402) (Macrococcoides caseolyticum).